The primary structure comprises 194 residues: dCTP deaminase (194 aa).

Residues 110–115, D128, 136–138, Y171, K178, and Q182 contribute to the dCTP site; these read RSSLAR and VLE. E138 acts as the Proton donor/acceptor in catalysis.

It belongs to the dCTP deaminase family. As to quaternary structure, homotrimer.

It catalyses the reaction dCTP + H2O + H(+) = dUTP + NH4(+). It participates in pyrimidine metabolism; dUMP biosynthesis; dUMP from dCTP (dUTP route): step 1/2. In terms of biological role, catalyzes the deamination of dCTP to dUTP. This is dCTP deaminase from Mannheimia succiniciproducens (strain KCTC 0769BP / MBEL55E).